The following is a 512-amino-acid chain: Probable amidase At4g34880 (512 aa).

Active-site charge relay system residues include K117 and S198. The Acyl-ester intermediate role is filled by S222.

The protein belongs to the amidase family. As to expression, expressed in vasculature of roots, cotyledons, leaves and sepals.

It catalyses the reaction a monocarboxylic acid amide + H2O = a monocarboxylate + NH4(+). The polypeptide is Probable amidase At4g34880 (Arabidopsis thaliana (Mouse-ear cress)).